The sequence spans 451 residues: TERF1-interacting nuclear factor 2 (451 aa).

The residue at position 2 (Ala-2) is an N-acetylalanine. The segment at 229-257 (NPLPKAKPGTHLPQGPSSRTHPEPLAGRH) is disordered. The TBM signature appears at 256–278 (RHFNLAPLGRRRVQSQWASTRGG). Residues 262 to 268 (PLGRRRV) carry the Nuclear localization signal motif. Ser-295 carries the phosphoserine modification. Glycyl lysine isopeptide (Lys-Gly) (interchain with G-Cter in SUMO2) cross-links involve residues Lys-302, Lys-306, Lys-341, and Lys-353.

In terms of assembly, monomer. Found in a complex with POT1; TERF1 and TNKS1. Component of the shelterin complex (telosome) composed of TERF1, TERF2, TINF2, TERF2IP ACD and POT1. Interacts with TERF1, TERF2 and ACD. As to expression, detected in heart, brain, placenta, lung, liver, skeletal muscle, kidney and pancreas.

Its subcellular location is the nucleus. It is found in the chromosome. The protein localises to the telomere. It localises to the nucleus matrix. Functionally, component of the shelterin complex (telosome) that is involved in the regulation of telomere length and protection. Shelterin associates with arrays of double-stranded TTAGGG repeats added by telomerase and protects chromosome ends; without its protective activity, telomeres are no longer hidden from the DNA damage surveillance and chromosome ends are inappropriately processed by DNA repair pathways. Plays a role in shelterin complex assembly. Isoform 1 may have additional role in tethering telomeres to the nuclear matrix. In Homo sapiens (Human), this protein is TERF1-interacting nuclear factor 2 (TINF2).